Reading from the N-terminus, the 101-residue chain is Small ribosomal subunit protein uS14 (101 aa).

It belongs to the universal ribosomal protein uS14 family. Part of the 30S ribosomal subunit. Contacts proteins S3 and S10.

Functionally, binds 16S rRNA, required for the assembly of 30S particles and may also be responsible for determining the conformation of the 16S rRNA at the A site. The protein is Small ribosomal subunit protein uS14 of Neisseria meningitidis serogroup C / serotype 2a (strain ATCC 700532 / DSM 15464 / FAM18).